Here is a 586-residue protein sequence, read N- to C-terminus: Ferredoxin--nitrite reductase, chloroplastic (586 aa).

A compositionally biased stretch (low complexity) spans 1 to 18 (MTSFSLTFTSPLLPSSST). Residues 1–20 (MTSFSLTFTSPLLPSSSTKP) form a disordered region. The N-terminal 25 residues, 1 to 25 (MTSFSLTFTSPLLPSSSTKPKRSVL), are a transit peptide targeting the chloroplast. A Glycyl lysine isopeptide (Lys-Gly) (interchain with G-Cter in ubiquitin) cross-link involves residue lysine 103. [4Fe-4S] cluster contacts are provided by cysteine 464, cysteine 470, cysteine 505, and cysteine 509. Residue cysteine 509 participates in siroheme binding.

It belongs to the nitrite and sulfite reductase 4Fe-4S domain family. As to quaternary structure, monomer. Siroheme serves as cofactor. It depends on [4Fe-4S] cluster as a cofactor.

The protein localises to the plastid. Its subcellular location is the chloroplast. The enzyme catalyses 6 oxidized [2Fe-2S]-[ferredoxin] + NH4(+) + 2 H2O = nitrite + 6 reduced [2Fe-2S]-[ferredoxin] + 8 H(+). The protein operates within nitrogen metabolism; nitrate reduction (assimilation). Its function is as follows. Catalyzes the six-electron reduction of nitrite to ammonium. This chain is Ferredoxin--nitrite reductase, chloroplastic (NIR1), found in Arabidopsis thaliana (Mouse-ear cress).